The sequence spans 531 residues: MSSFDKNDERAQLMVPKSINEGKVVKLSQKTLVTKKIERQVVPEEKYIAGLDKIIEKDYFPHLKKMQAQKEYLEAVANKDINKIKELQMKFCSTGSVRTDRSFRTPITTRSTTEAPDVSSFDADTPGPSSASTSSAHDWMQSPMPFANEEGDNEALNRKRKKKKEETLTSYLNKYTSEDNASFEELAKVMREREDARRPWVYKAEEEHNKNLVTRQAIAAEADVQLALKHAVDADDNRPLNVDNWAYKAWNTVLFNPDGAALTPAEIADAARKQQTEINKRGTRFPDSGKLKPSDEAMTRAAVSHALANAGKVDFLGNEVTPANSFKLLETPNPNPDDMDSPLMTWGEIDGTPFRLDAPDVTEHSLPGAAPVFKIPEVPYREKIAQSMNDSIAAKYRDKRKVAMRAAEGAHFSRTPGFGSKRVSDKLAQLSPAAQKLATKKLGLKMLPAHKSPFASPKIMSNWSRPSSSKRSTTPGSAWSRGSTTPGSSWSQGAQTPGTPGIESMIRRKGDNVGPSTSAGAADRANAGDFF.

2 disordered regions span residues 104–163 and 453–531; these read RTPI…RKKK and PFAS…GDFF. Residues 105-114 are compositionally biased toward polar residues; sequence TPITTRSTTE. Low complexity-rich tracts occupy residues 125 to 136 and 464 to 477; these read TPGPSSASTSSA and SRPSSSKRSTTPGS. Over residues 480–498 the composition is skewed to polar residues; it reads SRGSTTPGSSWSQGAQTPG.

The protein belongs to the ESS2 family.

It is found in the nucleus. Its function is as follows. Regulates pre-mRNA splicing. In Caenorhabditis elegans, this protein is Splicing factor ESS-2 (ess-2).